The primary structure comprises 298 residues: MSAQNPLFSGSIVALVTPMNHYGEVDFSCLEKLVEHHIEAGSNALVSVGTTGESATLSIEENVKVIEKTVEFAKGRIPIIAGAGANATSEAITMTKLLRDSGVAGCLSVVPYYNKPTQEGMYQHFKAIAECTDLPQILYNVPSRTGSDMKPETVARLAEIENIVGIKEATGDVSRIVKIKQLAGKNFIVLSGNDTTGLEAIKLGAEGVISVTNNIAAKDMADMCRYALAGDFDKAEEINARLMRLHHDLFIESNPIPVKWAAYRLGLIKSPHLRLPLTTLSEEIQPKVEDALKIAGLL.

Thr-51 contacts pyruvate. Tyr-139 (proton donor/acceptor) is an active-site residue. Residue Lys-167 is the Schiff-base intermediate with substrate of the active site. Ile-209 is a binding site for pyruvate.

The protein belongs to the DapA family. In terms of assembly, homotetramer; dimer of dimers.

The protein localises to the cytoplasm. The enzyme catalyses L-aspartate 4-semialdehyde + pyruvate = (2S,4S)-4-hydroxy-2,3,4,5-tetrahydrodipicolinate + H2O + H(+). It participates in amino-acid biosynthesis; L-lysine biosynthesis via DAP pathway; (S)-tetrahydrodipicolinate from L-aspartate: step 3/4. Functionally, catalyzes the condensation of (S)-aspartate-beta-semialdehyde [(S)-ASA] and pyruvate to 4-hydroxy-tetrahydrodipicolinate (HTPA). The chain is 4-hydroxy-tetrahydrodipicolinate synthase from Haemophilus influenzae (strain 86-028NP).